A 1139-amino-acid polypeptide reads, in one-letter code: Sterol regulatory element-binding protein 2 (1139 aa).

The interval methionine 1–leucine 50 is transcriptional activation (acidic). The Cytoplasmic portion of the chain corresponds to methionine 1–arginine 479. 2 disordered regions span residues glutamate 48–threonine 104 and threonine 119–leucine 143. The segment covering glycine 61–arginine 77 has biased composition (low complexity). The segment covering arginine 90 to threonine 104 has biased composition (polar residues). Residues threonine 119–glutamine 138 are compositionally biased toward pro residues. Residues glutamine 235 to glycine 489 are interaction with LMNA. Residues glutamate 328–leucine 378 form the bHLH domain. The tract at residues leucine 378 to asparagine 399 is leucine-zipper. Residue lysine 462 forms a Glycyl lysine isopeptide (Lys-Gly) (interchain with G-Cter in SUMO2) linkage. Residues isoleucine 480 to glutamine 500 form a helical membrane-spanning segment. Topologically, residues tryptophan 501–aspartate 531 are lumenal. A helical membrane pass occupies residues tryptophan 532 to valine 552. The Cytoplasmic segment spans residues lysine 553–serine 1139. Residue serine 1096 is modified to Phosphoserine.

This sequence belongs to the SREBP family. As to quaternary structure, homodimer; efficient DNA binding of the soluble transcription factor fragment requires dimerization with another bHLH protein. Interacts with LMNA. Forms a tight complex with SCAP, the SCAP-SREBP complex, in the endoplasmic reticulum membrane and the Golgi apparatus. Interacts with PAQR3; the interaction anchors the SCAP-SREBP complex to the Golgi apparatus in low cholesterol conditions. Interacts (via C-terminal domain) with RNF139. In terms of processing, processed in the Golgi apparatus, releasing the protein from the membrane. At low cholesterol the SCAP-SREBP complex is recruited into COPII vesicles for export from the endoplasmic reticulum. In the Golgi, complex SREBPs are cleaved sequentially by site-1 (MBTPS1, S1P) and site-2 (MBTPS2, S2P) proteases. The first cleavage by site-1 protease occurs within the luminal loop, the second cleavage by site-2 protease occurs within the first transmembrane domain, releasing the transcription factor from the Golgi membrane. Apoptosis triggers cleavage by the cysteine proteases caspase-3 and caspase-7. Cleavage and activation is induced by mediated cholesterol efflux. Post-translationally, phosphorylated by AMPK, leading to suppress protein processing and nuclear translocation, and repress target gene expression. SCAP-free SREBF2 is ubiquitinated by the BCR(ARMC5) complex, leading to its degradation. In terms of processing, ubiquitinated; the nuclear form has a rapid turnover and is rapidly ubiquitinated and degraded by the proteasome in the nucleus.

It localises to the endoplasmic reticulum membrane. Its subcellular location is the golgi apparatus membrane. The protein resides in the cytoplasmic vesicle. It is found in the COPII-coated vesicle membrane. The protein localises to the nucleus. Activation by cleavage is down-regulated upon activation of SIRT3-dependent PRKAA1/AMPK-alpha signaling cascade which leads to inhibition of ATP-consuming lipogenesis to restore cellular energy balance. Precursor of the transcription factor form (Processed sterol regulatory element-binding protein 2), which is embedded in the endoplasmic reticulum membrane. Low sterol concentrations promote processing of this form, releasing the transcription factor form that translocates into the nucleus and activates transcription of genes involved in cholesterol biosynthesis. Its function is as follows. Key transcription factor that regulates expression of genes involved in cholesterol biosynthesis. Binds to the sterol regulatory element 1 (SRE-1) (5'-ATCACCCCAC-3'). Has dual sequence specificity binding to both an E-box motif (5'-ATCACGTGA-3') and to SRE-1 (5'-ATCACCCCAC-3'). Regulates transcription of genes related to cholesterol synthesis pathway. The chain is Sterol regulatory element-binding protein 2 (SREBF2) from Cricetulus griseus (Chinese hamster).